The following is a 70-amino-acid chain: U2-agatoxin-Ao1q (70 aa).

An N-terminal signal peptide occupies residues 1 to 20 (MRSIISLLLISAMVFSMIAA). Residues 21 to 34 (VPEEEGLQLSEDER) constitute a propeptide that is removed on maturation. Intrachain disulfides connect cysteine 44–cysteine 58 and cysteine 52–cysteine 68. A Leucine amide modification is found at leucine 69.

The protein belongs to the neurotoxin 01 (U2-agtx) family. Post-translationally, does not contain a cysteine at position 53 which disrupts the cysteine framework. As to expression, expressed by the venom gland.

The protein resides in the secreted. Insect active toxin causing rapid but reversible paralysis in crickets. No activity shown in mammals. Does not show effect on mammalian voltage-gated calcium channels. This is U2-agatoxin-Ao1q from Agelena orientalis (Funnel-web spider).